Consider the following 570-residue polypeptide: Protein misato homolog 1 (570 aa).

Serine 495 is modified (phosphoserine).

Belongs to the misato family. As to expression, present in all cell lines tested (at protein level). Widely expressed.

The protein resides in the mitochondrion outer membrane. Its subcellular location is the cytoplasm. Involved in the regulation of mitochondrial distribution and morphology. Required for mitochondrial fusion and mitochondrial network formation. This Homo sapiens (Human) protein is Protein misato homolog 1 (MSTO1).